Consider the following 530-residue polypeptide: Glutamate--cysteine ligase (530 aa).

The protein belongs to the glutamate--cysteine ligase type 1 family. Type 1 subfamily.

The catalysed reaction is L-cysteine + L-glutamate + ATP = gamma-L-glutamyl-L-cysteine + ADP + phosphate + H(+). The protein operates within sulfur metabolism; glutathione biosynthesis; glutathione from L-cysteine and L-glutamate: step 1/2. This is Glutamate--cysteine ligase from Azotobacter vinelandii (strain DJ / ATCC BAA-1303).